The following is a 196-amino-acid chain: dITP/XTP pyrophosphatase (196 aa).

9-14 (TSNAGK) lines the substrate pocket. 2 residues coordinate Mg(2+): E39 and D68. Catalysis depends on D68, which acts as the Proton acceptor. Substrate-binding positions include S69, 147–150 (FGYD), K170, and 175–176 (HR).

This sequence belongs to the HAM1 NTPase family. In terms of assembly, homodimer. Mg(2+) serves as cofactor.

It carries out the reaction XTP + H2O = XMP + diphosphate + H(+). The catalysed reaction is dITP + H2O = dIMP + diphosphate + H(+). It catalyses the reaction ITP + H2O = IMP + diphosphate + H(+). In terms of biological role, pyrophosphatase that catalyzes the hydrolysis of nucleoside triphosphates to their monophosphate derivatives, with a high preference for the non-canonical purine nucleotides XTP (xanthosine triphosphate), dITP (deoxyinosine triphosphate) and ITP. Seems to function as a house-cleaning enzyme that removes non-canonical purine nucleotides from the nucleotide pool, thus preventing their incorporation into DNA/RNA and avoiding chromosomal lesions. The sequence is that of dITP/XTP pyrophosphatase from Nostoc sp. (strain PCC 7120 / SAG 25.82 / UTEX 2576).